Reading from the N-terminus, the 175-residue chain is Bifunctional protein PyrR (175 aa).

Substrate-binding positions include 40 to 41, R85, 102 to 110, R135, and V159; these read TR and DDVLYTGRT. The PRPP-binding signature appears at 98-110; that stretch reads VIIIDDVLYTGRT.

The protein belongs to the purine/pyrimidine phosphoribosyltransferase family. PyrR subfamily. In terms of assembly, homodimer and homohexamer; in equilibrium.

It carries out the reaction UMP + diphosphate = 5-phospho-alpha-D-ribose 1-diphosphate + uracil. Its function is as follows. Regulates transcriptional attenuation of the pyrimidine nucleotide (pyr) operon by binding in a uridine-dependent manner to specific sites on pyr mRNA. This disrupts an antiterminator hairpin in the RNA and favors formation of a downstream transcription terminator, leading to a reduced expression of downstream genes. Functionally, also displays a weak uracil phosphoribosyltransferase activity which is not physiologically significant. This chain is Bifunctional protein PyrR, found in Staphylococcus saprophyticus subsp. saprophyticus (strain ATCC 15305 / DSM 20229 / NCIMB 8711 / NCTC 7292 / S-41).